Here is a 189-residue protein sequence, read N- to C-terminus: uncharacterized protein (189 aa).

Positions 1-23 (MIKTTPHKIVILMGILLSPSVFA) are cleaved as a signal peptide. The disordered stretch occupies residues 104-125 (SSPKLIIPQSGDSSSTTSNIGM). A compositionally biased stretch (polar residues) spans 113-123 (SGDSSSTTSNI).

It belongs to the fimbrial protein family.

Its subcellular location is the fimbrium. Its function is as follows. Part of the yadCKLM-htrE-yadVN fimbrial operon. Could contribute to adhesion to various surfaces in specific environmental niches. This is an uncharacterized protein from Escherichia coli (strain K12).